A 404-amino-acid chain; its full sequence is MSGPNYKADFPLLLRSPRVHYLDSAATTQRPAPVLERVMHYHTHLNGNAGRGSHELAVESALLIENTRKKTAQFINAAPTHDIVFTKSCTESLNIIAHCYALPRLRAGDEIVLAISNHHANIVPWQHVCRCTGATIQWLYPDAEGNLDIQEAQKKIRACTKIVSFSAVVNATGAVNPAQELTALAHQVGAVVVIDGAQAMVHGVPNVADLGCDFFVFSGHKMFSLFGVGVLCAPHTLLESMPPFLYGGGMVDFVTEQESVFKGAPHKYEGGSANTAAVVSLCAAIEYCESLESSAVRASVHALDAALLARLEELPFLETYHARARERLGIIAFNVKNVHSHDTAHILGEEGVMVRSGDHCSKPFMTHLSIQSCCRASFCIYNTMEDVEALTRALHAVGRIFQCS.

At Lys221 the chain carries N6-(pyridoxal phosphate)lysine. Cys360 serves as the catalytic Cysteine persulfide intermediate.

It belongs to the class-V pyridoxal-phosphate-dependent aminotransferase family. Csd subfamily. Pyridoxal 5'-phosphate serves as cofactor.

It catalyses the reaction (sulfur carrier)-H + L-cysteine = (sulfur carrier)-SH + L-alanine. Its function is as follows. Catalyzes the removal of elemental sulfur and selenium atoms from L-cysteine, L-cystine, L-selenocysteine, and L-selenocystine to produce L-alanine. This is Probable cysteine desulfurase (csd) from Treponema pallidum (strain Nichols).